Consider the following 612-residue polypeptide: Capsid protein (612 aa).

A disordered region spans residues 1–53 (MDANVQIRPARNNPSQGNQGRNNNNKRRRRRRGLKLPPVVAPITSPGQMAEPA). A compositionally biased stretch (low complexity) spans 11 to 23 (RNNPSQGNQGRNN). Basic residues predominate over residues 24-34 (NNKRRRRRRGL).

The protein belongs to the tetravirus capsid protein family.

The protein localises to the virion. Its function is as follows. Self-assembles to form an icosahedral capsid with a T=4 symmetry, about 35 nm in diameter, and consisting of 240 copies of the two structural proteins. This is Capsid protein from Nudaurelia capensis beta virus (isolate Pine emperor moth/South Africa) (NbetaV).